The chain runs to 624 residues: Kelch-like ECH-associated protein 1 (624 aa).

An S-(2-succinyl)cysteine modification is found at cysteine 38. Positions 77-149 (CDVTLQVKYE…AYTASISVGE (73 aa)) constitute a BTB domain. Arginine 135 participates in a covalent cross-link: N5-[4-(S-L-cysteinyl)-5-methyl-1H-imidazol-2-yl]-L-ornithine (Arg-Cys) (interchain with C-151 in KEAP1). Cysteine 151 carries the post-translational modification S-(2,3-dicarboxypropyl)cysteine; alternate. At cysteine 151 the chain carries S-(2-succinyl)cysteine; alternate. The residue at position 151 (cysteine 151) is an S-nitrosocysteine; alternate. An N5-[4-(S-L-cysteinyl)-5-methyl-1H-imidazol-2-yl]-L-ornithine (Cys-Arg) (interchain with R-135 in KEAP1) cross-link involves residue cysteine 151. The BACK domain maps to 184–286 (AIGIANFAEQ…TPRFLQTQLQ (103 aa)). Cysteine 241 bears the S-(2-succinyl)cysteine mark. Cysteine 257 and cysteine 273 each carry S-(2,3-dicarboxypropyl)cysteine. Residue cysteine 288 is modified to S-(2,3-dicarboxypropyl)cysteine; alternate. Cysteine 288 is modified (S-(2-succinyl)cysteine; alternate). Cysteine 319 bears the S-(2-succinyl)cysteine mark. Kelch repeat units follow at residues 327–372 (LIYT…VVGG), 373–423 (LLYA…VIDG), 424–470 (HIYA…VLNR), 471–517 (LLYA…VLHN), 519–564 (IYAA…VHQG), and 565–611 (KIYV…VTME). Cysteine 434 carries the post-translational modification S-cGMP-cysteine. Residue cysteine 613 is modified to S-(2-succinyl)cysteine.

The protein belongs to the KEAP1 family. As to quaternary structure, component of the BCR(KEAP1) E3 ubiquitin ligase complex, at least composed of 2 molecules of CUL3, 2 molecules of KEAP1, and RBX1. Interacts with NFE2L2/NRF2; the interaction is direct. Forms a ternary complex with NFE2L2/NRF2 and PGAM5. Interacts with (phosphorylated) SQSTM1/p62; the interaction is direct and inactivates the BCR(KEAP1) complex by sequestering it in inclusion bodies, promoting its degradation. Interacts with NFE2L1. Interacts with BPTF and PTMA. Interacts with MAP1LC3B. Interacts indirectly with ENC1. Interacts with SESN1 and SESN2. Interacts with HSP90AA1 and HSP90AB1. Interacts with PGCKA1; this interaction prevents the ubiquitination of KEAP1 by TRIM25, thus protecting KEAP1 from degradation. In terms of processing, non-enzymatic covalent modifications of reactive cysteines by electrophile metabolites inactivate the BCR(KEAP1) complex. Accumulation of fumarate promotes the formation of cysteine S-succination (S-(2-succinyl)cysteine), leading to inactivate the BCR(KEAP1) complex and promote NFE2L2/NRF2 nuclear accumulation and activation. Nitric oxide-dependent 8-Nitro-cGMP formation promotes cysteine guanylation (S-cGMP-cysteine), leading to NFE2L2/NRF2 nuclear accumulation and activation. Itaconate, an anti-inflammatory metabolite generated in response to lipopolysaccharide, alkylates cysteines, activating NFE2L2/NRF2. Methylglyoxal, a reactive metabolite that accumulates when the glycolytic enzyme PGK1 is inhibited, promotes formation of a methylimidazole cross-link between proximal Cys-151 and Arg-135 on another KEAP1 molecule, resulting in an inactive dimer that inactivates the BCR(KEAP1) complex. Post-translationally, degraded via a proteasomal-independent process during selective autophagy: interaction with phosphorylated SQSTM1/p62 sequesters KEAP1 in inclusion bodies, leading to its degradation. Auto-ubiquitinated by the BCR(KEAP1) complex. Quinone-induced oxidative stress, but not sulforaphane, increases its ubiquitination. Ubiquitination and subsequent degradation is most pronounced following prolonged exposure of cells to oxidative stress, particularly in glutathione-deficient cells that are highly susceptible to oxidative stress. Deubiquitinated by USP25; leading to stabilization. Ubiquitinated by TRIM25; leading to degradation upon ER stress.

Its subcellular location is the cytoplasm. It localises to the nucleus. Its pathway is protein modification; protein ubiquitination. Its activity is regulated as follows. Ubiquitin ligase activity of the BCR(KEAP1) complex is inhibited by oxidative stress and electrophile metabolites such as sulforaphane. Electrophile metabolites react with reactive cysteine residues in KEAP1 and trigger non-enzymatic covalent modifications of these cysteine residues, leading to inactivate the ubiquitin ligase activity of the BCR(KEAP1) complex. Selective autophagy also inactivates the BCR(KEAP1) complex via interaction between KEAP1 and SQSTM1/p62, which sequesters the complex in inclusion bodies and promotes its degradation. Its function is as follows. Substrate-specific adapter of a BCR (BTB-CUL3-RBX1) E3 ubiquitin ligase complex that regulates the response to oxidative stress by targeting NFE2L2/NRF2 for ubiquitination. KEAP1 acts as a key sensor of oxidative and electrophilic stress: in normal conditions, the BCR(KEAP1) complex mediates ubiquitination and degradation of NFE2L2/NRF2, a transcription factor regulating expression of many cytoprotective genes. In response to oxidative stress, different electrophile metabolites trigger non-enzymatic covalent modifications of highly reactive cysteine residues in KEAP1, leading to inactivate the ubiquitin ligase activity of the BCR(KEAP1) complex, promoting NFE2L2/NRF2 nuclear accumulation and expression of phase II detoxifying enzymes. In response to selective autophagy, KEAP1 is sequestered in inclusion bodies following its interaction with SQSTM1/p62, leading to inactivation of the BCR(KEAP1) complex and activation of NFE2L2/NRF2. The BCR(KEAP1) complex also mediates ubiquitination of SQSTM1/p62, increasing SQSTM1/p62 sequestering activity and degradation. The BCR(KEAP1) complex also targets BPTF and PGAM5 for ubiquitination and degradation by the proteasome. This is Kelch-like ECH-associated protein 1 from Mus musculus (Mouse).